A 307-amino-acid chain; its full sequence is Small ribosomal subunit protein uS2 (307 aa).

The disordered stretch occupies residues 256-307 (GGEAEQAAVDATGGAATEETPAAESTGAASEAAAVSEAAEPATEQPAADAEA). Over residues 259–307 (AEQAAVDATGGAATEETPAAESTGAASEAAAVSEAAEPATEQPAADAEA) the composition is skewed to low complexity.

Belongs to the universal ribosomal protein uS2 family.

This chain is Small ribosomal subunit protein uS2, found in Nocardioides sp. (strain ATCC BAA-499 / JS614).